Here is a 310-residue protein sequence, read N- to C-terminus: Inner membrane protein YfdC (310 aa).

A compositionally biased stretch (basic and acidic residues) spans 1 to 12 (MDNDKIDQHSDE). Residues 1–27 (MDNDKIDQHSDEIEVESEEKERGKKIE) are disordered. Over 1–58 (MDNDKIDQHSDEIEVESEEKERGKKIEIDEDRLPSRAMAIHEHIRQDGEKELERDAMA) the chain is Cytoplasmic. A helical transmembrane segment spans residues 59–81 (LLWSAIAAGLSMGASLLAKGIFQ). The Periplasmic segment spans residues 82–90 (VELEGVPGS). The chain crosses the membrane as a helical span at residues 91–113 (FLLENLGYTFGFIIVIMARQQLF). At 114–133 (TENTVTAVLPVMQKPTMSNV) the chain is on the cytoplasmic side. The chain crosses the membrane as a helical span at residues 134-156 (GLLIRLWGVVLLGNILGTGIAAW). The Periplasmic portion of the chain corresponds to 157–186 (AFEYMPIFNEETRDAFVKIGMDVMKNTPSE). The helical transmembrane segment at 187–206 (MFANAIISGWLIATMVWMFP) threads the bilayer. At 207–212 (AAGAAK) the chain is on the cytoplasmic side. The chain crosses the membrane as a helical span at residues 213–232 (IVVIILMTWLIALGDTTHIV). Topologically, residues 233 to 251 (VGSVEILYLVFNGTLHWSD) are periplasmic. A helical membrane pass occupies residues 252–274 (FIWPFALPTLAGNICGGTFIFAL). Residues 275–310 (MSHAQIRNDMSNKRKAEARQKAERAENIKKNYKNPA) are Cytoplasmic-facing. Over residues 291–303 (EARQKAERAENIK) the composition is skewed to basic and acidic residues. Residues 291-310 (EARQKAERAENIKKNYKNPA) are disordered.

Its subcellular location is the cell inner membrane. The polypeptide is Inner membrane protein YfdC (yfdC) (Escherichia coli (strain K12)).